The chain runs to 186 residues: Ribosome-recycling factor (186 aa).

The protein belongs to the RRF family.

It localises to the cytoplasm. Responsible for the release of ribosomes from messenger RNA at the termination of protein biosynthesis. May increase the efficiency of translation by recycling ribosomes from one round of translation to another. This is Ribosome-recycling factor from Leifsonia xyli subsp. xyli (strain CTCB07).